Here is a 680-residue protein sequence, read N- to C-terminus: Translation factor GUF1 homolog, chloroplastic (680 aa).

The N-terminal 51 residues, 1–51, are a transit peptide targeting the chloroplast; sequence MATATASRLAVPAPRTSPQAPGRRRPAAPLPSAPPRPRALSAAPRGRVVCP. Residues 1–68 form a disordered region; that stretch reads MATATASRLA…ASTTDAGQDR (68 aa). The segment covering 28 to 37 has biased composition (pro residues); sequence APLPSAPPRP. A compositionally biased stretch (low complexity) spans 38 to 60; sequence RALSAAPRGRVVCPAAPASSPAS. A tr-type G domain is found at 75–256; that stretch reads SNIRNFSIIA…AIVTKIPPPQ (182 aa). Residues 84–91, 149–153, and 203–206 contribute to the GTP site; these read AHIDHGKS, DTPGH, and NKID.

The protein belongs to the TRAFAC class translation factor GTPase superfamily. Classic translation factor GTPase family. LepA subfamily.

The protein localises to the plastid. Its subcellular location is the chloroplast. The enzyme catalyses GTP + H2O = GDP + phosphate + H(+). Functionally, promotes chloroplast protein synthesis. May act as a fidelity factor of the translation reaction, by catalyzing a one-codon backward translocation of tRNAs on improperly translocated ribosomes. This is Translation factor GUF1 homolog, chloroplastic from Oryza sativa subsp. japonica (Rice).